The sequence spans 571 residues: 2-succinyl-5-enolpyruvyl-6-hydroxy-3-cyclohexene-1-carboxylate synthase (571 aa).

The protein belongs to the TPP enzyme family. MenD subfamily. As to quaternary structure, homodimer. It depends on Mg(2+) as a cofactor. Mn(2+) serves as cofactor. Thiamine diphosphate is required as a cofactor.

The catalysed reaction is isochorismate + 2-oxoglutarate + H(+) = 5-enolpyruvoyl-6-hydroxy-2-succinyl-cyclohex-3-ene-1-carboxylate + CO2. It functions in the pathway quinol/quinone metabolism; 1,4-dihydroxy-2-naphthoate biosynthesis; 1,4-dihydroxy-2-naphthoate from chorismate: step 2/7. The protein operates within quinol/quinone metabolism; menaquinone biosynthesis. Its function is as follows. Catalyzes the thiamine diphosphate-dependent decarboxylation of 2-oxoglutarate and the subsequent addition of the resulting succinic semialdehyde-thiamine pyrophosphate anion to isochorismate to yield 2-succinyl-5-enolpyruvyl-6-hydroxy-3-cyclohexene-1-carboxylate (SEPHCHC). The chain is 2-succinyl-5-enolpyruvyl-6-hydroxy-3-cyclohexene-1-carboxylate synthase from Vibrio parahaemolyticus serotype O3:K6 (strain RIMD 2210633).